The chain runs to 64 residues: Large ribosomal subunit protein bL35 (64 aa).

It belongs to the bacterial ribosomal protein bL35 family.

This is Large ribosomal subunit protein bL35 from Pseudomonas savastanoi pv. phaseolicola (strain 1448A / Race 6) (Pseudomonas syringae pv. phaseolicola (strain 1448A / Race 6)).